A 196-amino-acid chain; its full sequence is Large ribosomal subunit protein uL10 (196 aa).

Positions 169 to 196 are disordered; sequence KAAECPAEAPQPAAETPAEAPEAPADAE. A compositionally biased stretch (low complexity) spans 172–196; sequence ECPAEAPQPAAETPAEAPEAPADAE.

It belongs to the universal ribosomal protein uL10 family. In terms of assembly, part of the ribosomal stalk of the 50S ribosomal subunit. The N-terminus interacts with L11 and the large rRNA to form the base of the stalk. The C-terminus forms an elongated spine to which L12 dimers bind in a sequential fashion forming a multimeric L10(L12)X complex.

Forms part of the ribosomal stalk, playing a central role in the interaction of the ribosome with GTP-bound translation factors. The sequence is that of Large ribosomal subunit protein uL10 from Mycobacterium avium (strain 104).